Consider the following 546-residue polypeptide: Smad protein daf-8 (546 aa).

An MH1 domain is found at 16–137 (AMAQKVLEET…YRWVELPTCQ (122 aa)). Disordered regions lie at residues 234-268 (LQQS…FIPN) and 292-317 (ENFS…PIEP). The segment covering 292-302 (ENFSSENNGNR) has biased composition (polar residues). An MH2 domain is found at 349–546 (WLKLIYYEEG…APPRICSSRT (198 aa)).

This sequence belongs to the dwarfin/SMAD family. Homodimer. Interacts with R-SMAD daf-14 and co-SMAD daf-3. Interacts with orphan nuclear receptor nhr-69. As to expression, expressed in the excretory cell and gonadal distal tip cells (DTCs).

The protein resides in the cytoplasm. The protein localises to the nucleus. Probably a receptor-regulated SMAD (R-SMAD) that is an intracellular signal transducer and transcriptional modulator activated by TGF-beta-like daf-7 signaling. Plays a role in TGF-beta-like daf-7 signaling in regulating entry into a developmentally arrested larval state known as dauer, in response to harsh environmental conditions; partially redundant with R-SMAD daf-14. Plays a role in inhibiting mitosis and promoting a switch to meiosis in the germ line, perhaps by down-regulating lag-2 transcription in the gonadal distal tip cells (DTCs). In cooperation with orphan nuclear receptor nhr-69 modulates the Insulin/IGF-1-like signaling (IIS) pathway, perhaps by regulating expression of the potassium channel exp-2, which in turn modulates the secretion of the insulin-like peptide daf-28. In Caenorhabditis elegans, this protein is Smad protein daf-8.